A 137-amino-acid polypeptide reads, in one-letter code: Nucleoside diphosphate kinase (137 aa).

6 residues coordinate ATP: K9, F57, R85, T91, R102, and N112. H115 acts as the Pros-phosphohistidine intermediate in catalysis.

It belongs to the NDK family. Homotetramer. It depends on Mg(2+) as a cofactor.

Its subcellular location is the cytoplasm. The catalysed reaction is a 2'-deoxyribonucleoside 5'-diphosphate + ATP = a 2'-deoxyribonucleoside 5'-triphosphate + ADP. It carries out the reaction a ribonucleoside 5'-diphosphate + ATP = a ribonucleoside 5'-triphosphate + ADP. Its function is as follows. Major role in the synthesis of nucleoside triphosphates other than ATP. The ATP gamma phosphate is transferred to the NDP beta phosphate via a ping-pong mechanism, using a phosphorylated active-site intermediate. This Geobacter sulfurreducens (strain ATCC 51573 / DSM 12127 / PCA) protein is Nucleoside diphosphate kinase.